The chain runs to 122 residues: Small ribosomal subunit protein uS12c (122 aa).

The protein belongs to the universal ribosomal protein uS12 family. Part of the 30S ribosomal subunit.

It localises to the plastid. The protein localises to the chloroplast. With S4 and S5 plays an important role in translational accuracy. Located at the interface of the 30S and 50S subunits. In Chloranthus spicatus (Chulantree), this protein is Small ribosomal subunit protein uS12c (rps12).